A 110-amino-acid polypeptide reads, in one-letter code: UPF0060 membrane protein PBPRB0495 (110 aa).

4 helical membrane passes run 7–27 (VGLF…PYLW), 33–53 (TIWL…LLTL), 63–83 (AAYG…VDGI), and 85–105 (PTVW…IIMF).

It belongs to the UPF0060 family.

It localises to the cell inner membrane. The sequence is that of UPF0060 membrane protein PBPRB0495 from Photobacterium profundum (strain SS9).